The primary structure comprises 137 residues: Small ribosomal subunit protein uS12 (137 aa).

Residues M1–N20 are disordered. At D102 the chain carries 3-methylthioaspartic acid.

Belongs to the universal ribosomal protein uS12 family. Part of the 30S ribosomal subunit. Contacts proteins S8 and S17. May interact with IF1 in the 30S initiation complex.

In terms of biological role, with S4 and S5 plays an important role in translational accuracy. Functionally, interacts with and stabilizes bases of the 16S rRNA that are involved in tRNA selection in the A site and with the mRNA backbone. Located at the interface of the 30S and 50S subunits, it traverses the body of the 30S subunit contacting proteins on the other side and probably holding the rRNA structure together. The combined cluster of proteins S8, S12 and S17 appears to hold together the shoulder and platform of the 30S subunit. The chain is Small ribosomal subunit protein uS12 from Mycoplasmopsis synoviae (strain 53) (Mycoplasma synoviae).